Here is a 514-residue protein sequence, read N- to C-terminus: Leucine-rich repeat-containing protein 14B (514 aa).

One copy of the LRR 1; degenerate repeat lies at 104 to 141 (RRRLRVADLTGIRDVQVQRCPCGRALGRWGRTQLLART). Residues 185 to 209 (RVHCPSFRADSLSPSQLLHVLRLAG) form an LRR 2; degenerate repeat. The LRR 4; degenerate repeat unit spans residues 238–277 (FPRLASLTLPTKAFDAPPTYASTPDGEDPLLASIARELSK). 5 LRR repeats span residues 278–302 (MAQL…LGPL), 303–334 (QTPL…AHLE), 335–350 (VLDL…YPST), 359–386 (SRTL…GLSP), and 387–411 (CHRL…LFTA).

It belongs to the PRAME family. LRRC14 subfamily.

The chain is Leucine-rich repeat-containing protein 14B from Homo sapiens (Human).